The primary structure comprises 286 residues: Aspartate/glutamate leucyltransferase (286 aa).

The protein belongs to the R-transferase family. Bpt subfamily.

The protein localises to the cytoplasm. It carries out the reaction N-terminal L-glutamyl-[protein] + L-leucyl-tRNA(Leu) = N-terminal L-leucyl-L-glutamyl-[protein] + tRNA(Leu) + H(+). It catalyses the reaction N-terminal L-aspartyl-[protein] + L-leucyl-tRNA(Leu) = N-terminal L-leucyl-L-aspartyl-[protein] + tRNA(Leu) + H(+). In terms of biological role, functions in the N-end rule pathway of protein degradation where it conjugates Leu from its aminoacyl-tRNA to the N-termini of proteins containing an N-terminal aspartate or glutamate. This is Aspartate/glutamate leucyltransferase from Jannaschia sp. (strain CCS1).